Here is a 264-residue protein sequence, read N- to C-terminus: tRNA pseudouridine synthase A (264 aa).

Residue aspartate 51 is the Nucleophile of the active site. A substrate-binding site is contributed by tyrosine 109.

The protein belongs to the tRNA pseudouridine synthase TruA family. Homodimer.

It carries out the reaction uridine(38/39/40) in tRNA = pseudouridine(38/39/40) in tRNA. Functionally, formation of pseudouridine at positions 38, 39 and 40 in the anticodon stem and loop of transfer RNAs. This Vibrio cholerae serotype O1 (strain ATCC 39541 / Classical Ogawa 395 / O395) protein is tRNA pseudouridine synthase A.